A 629-amino-acid polypeptide reads, in one-letter code: tRNA uridine 5-carboxymethylaminomethyl modification enzyme MnmG (629 aa).

FAD contacts are provided by residues 13 to 18, valine 125, and serine 180; that span reads GGGHAG. Position 273–287 (273–287) interacts with NAD(+); that stretch reads GPRYCPSIEDKVMRF. An FAD-binding site is contributed by glutamine 370.

Belongs to the MnmG family. As to quaternary structure, homodimer. Heterotetramer of two MnmE and two MnmG subunits. FAD serves as cofactor.

Its subcellular location is the cytoplasm. Its function is as follows. NAD-binding protein involved in the addition of a carboxymethylaminomethyl (cmnm) group at the wobble position (U34) of certain tRNAs, forming tRNA-cmnm(5)s(2)U34. This Aliivibrio fischeri (strain ATCC 700601 / ES114) (Vibrio fischeri) protein is tRNA uridine 5-carboxymethylaminomethyl modification enzyme MnmG.